Reading from the N-terminus, the 189-residue chain is Peptidyl-tRNA hydrolase (189 aa).

Tyr-14 contributes to the tRNA binding site. His-19 functions as the Proton acceptor in the catalytic mechanism. TRNA-binding residues include Phe-64, Asn-66, and Asn-112.

It belongs to the PTH family. As to quaternary structure, monomer.

The protein localises to the cytoplasm. The enzyme catalyses an N-acyl-L-alpha-aminoacyl-tRNA + H2O = an N-acyl-L-amino acid + a tRNA + H(+). Its function is as follows. Hydrolyzes ribosome-free peptidyl-tRNAs (with 1 or more amino acids incorporated), which drop off the ribosome during protein synthesis, or as a result of ribosome stalling. Functionally, catalyzes the release of premature peptidyl moieties from peptidyl-tRNA molecules trapped in stalled 50S ribosomal subunits, and thus maintains levels of free tRNAs and 50S ribosomes. The polypeptide is Peptidyl-tRNA hydrolase (Erythrobacter litoralis (strain HTCC2594)).